A 252-amino-acid polypeptide reads, in one-letter code: Ciliogenesis and planar polarity effector 2 (252 aa).

The small GTPase-like stretch occupies residues 46–252 (QMNVDLVRYK…LRETSSEIIV (207 aa)). GTP contacts are provided by residues 62 to 67 (TGVGKS) and 173 to 176 (TKFD).

The protein belongs to the small GTPase superfamily. Rab family.

It is found in the cytoplasm. Its subcellular location is the cytoskeleton. The protein resides in the cilium basal body. Functionally, potential effector of the planar cell polarity signaling pathway. Plays a role in targeted membrane trafficking most probably at the level of vesicle fusion with membranes. Involved in cilium biogenesis by regulating the transport of cargo proteins to the basal body and to the apical tips of cilia. More generally involved in exocytosis in secretory cells. The sequence is that of Ciliogenesis and planar polarity effector 2 (cplane2) from Danio rerio (Zebrafish).